Here is a 330-residue protein sequence, read N- to C-terminus: Glycerol-3-phosphate dehydrogenase [NAD(P)+] 1 (330 aa).

NADPH contacts are provided by tryptophan 15, arginine 35, and lysine 105. Positions 105, 133, and 135 each coordinate sn-glycerol 3-phosphate. Alanine 137 contacts NADPH. Positions 188, 241, 251, 252, and 253 each coordinate sn-glycerol 3-phosphate. The active-site Proton acceptor is the lysine 188. Position 252 (arginine 252) interacts with NADPH. Residues isoleucine 276 and glutamate 278 each contribute to the NADPH site.

This sequence belongs to the NAD-dependent glycerol-3-phosphate dehydrogenase family.

It localises to the cytoplasm. The catalysed reaction is sn-glycerol 3-phosphate + NAD(+) = dihydroxyacetone phosphate + NADH + H(+). It catalyses the reaction sn-glycerol 3-phosphate + NADP(+) = dihydroxyacetone phosphate + NADPH + H(+). The protein operates within membrane lipid metabolism; glycerophospholipid metabolism. Functionally, catalyzes the reduction of the glycolytic intermediate dihydroxyacetone phosphate (DHAP) to sn-glycerol 3-phosphate (G3P), the key precursor for phospholipid synthesis. The polypeptide is Glycerol-3-phosphate dehydrogenase [NAD(P)+] 1 (Sphingopyxis alaskensis (strain DSM 13593 / LMG 18877 / RB2256) (Sphingomonas alaskensis)).